The primary structure comprises 398 residues: MSEGNAAGEPSTPGGPRPLLTGARGLIGRRPAPPLTPGRLPSIRSRDLTLGGVKKKTFTPNIISRKIKEEPKEEVTVKKEKRERDRDRQREGHGRGRGRPEVIQSHSIFEQGPAEMMKKKGNWDKTVDVSDMGPSHIINIKKEKRETDEETKQILRMLEKDDFLDDPGLRNDTRNMPVQLPLAHSGWLFKEENDEPDVKPWLAGPKEEDMEVDIPAVKVKEEPRDEEEEAKMKAPPKAARKTPGLPKDVSVAELLRELSLTKEEELLFLQLPDTLPGQPPTQDIKPIKTEVQGEDGQVVLIKQEKDREAKLAENACTLADLTEGQVGKLLIRKSGRVQLLLGKVTLDVTMGTACSFLQELVSVGLGDSRTGEMTVLGHVKHKLVCSPDFESLLDHKHR.

The disordered stretch occupies residues Met-1–Ala-114. Position 2 is an N-acetylserine (Ser-2). Ser-42 carries the post-translational modification Phosphoserine. A compositionally biased stretch (basic and acidic residues) spans Lys-66 to Pro-100. Residues Lys-68 and Lys-78 each participate in a glycyl lysine isopeptide (Lys-Gly) (interchain with G-Cter in SUMO2) cross-link. An omega-N-methylarginine mark is found at Arg-95, Arg-97, and Arg-99. Residues Lys-141, Lys-152, Lys-160, Lys-190, Lys-199, Lys-206, Lys-220, Lys-285, Lys-302, Lys-310, and Lys-396 each participate in a glycyl lysine isopeptide (Lys-Gly) (interchain with G-Cter in SUMO2) cross-link. The tract at residues Lys-220 to Gly-244 is disordered.

It belongs to the eukaryotic RPC4/POLR3D RNA polymerase subunit family. As to quaternary structure, component of the RNA polymerase III complex consisting of 17 subunits: a ten-subunit horseshoe-shaped catalytic core composed of POLR3A/RPC1, POLR3B/RPC2, POLR1C/RPAC1, POLR1D/RPAC2, POLR3K/RPC10, POLR2E/RPABC1, POLR2F/RPABC2, POLR2H/RPABC3, POLR2K/RPABC4 and POLR2L/RPABC5; a mobile stalk composed of two subunits POLR3H/RPC8 and CRCP/RPC9, protruding from the core and functioning primarily in transcription initiation; and additional subunits homologous to general transcription factors of the RNA polymerase II machinery, POLR3C/RPC3-POLR3F/RPC6-POLR3G/RPC7 heterotrimer required for transcription initiation and POLR3D/RPC4-POLR3E/RPC5 heterodimer involved in both transcription initiation and termination. Post-translationally, sumoylation on Lys-141 can serve as a signal to mark misfolded Pol III for proteasomal degradation.

The protein resides in the nucleus. Functionally, DNA-dependent RNA polymerase catalyzes the transcription of DNA into RNA using the four ribonucleoside triphosphates as substrates. Specific peripheric component of RNA polymerase III (Pol III) which synthesizes small non-coding RNAs including 5S rRNA, snRNAs, tRNAs and miRNAs from at least 500 distinct genomic loci. Assembles with POLR3E/RPC5 forming a subcomplex that binds the Pol III core. Enables recruitment of Pol III at transcription initiation site and drives transcription initiation from both type 2 and type 3 DNA promoters. Required for efficient transcription termination and reinitiation. Pol III plays a key role in sensing and limiting infection by intracellular bacteria and DNA viruses. Acts as nuclear and cytosolic DNA sensor involved in innate immune response. Can sense non-self dsDNA that serves as template for transcription into dsRNA. The non-self RNA polymerase III transcripts, such as Epstein-Barr virus-encoded RNAs (EBERs) induce type I interferon and NF-kappa-B through the RIG-I pathway. The chain is DNA-directed RNA polymerase III subunit RPC4 from Homo sapiens (Human).